The sequence spans 110 residues: Hydrogenase maturation factor HypA (110 aa).

Histidine 2 serves as a coordination point for Ni(2+). Residues cysteine 73, cysteine 76, cysteine 87, and cysteine 89 each coordinate Zn(2+).

The protein belongs to the HypA/HybF family.

In terms of biological role, involved in the maturation of [NiFe] hydrogenases. Required for nickel insertion into the metal center of the hydrogenase. The sequence is that of Hydrogenase maturation factor HypA from Archaeoglobus fulgidus (strain ATCC 49558 / DSM 4304 / JCM 9628 / NBRC 100126 / VC-16).